Reading from the N-terminus, the 169-residue chain is Oleosin Cor a 15 (169 aa).

A run of 2 helical transmembrane segments spans residues 38 to 58 (IAVV…GLTF) and 70 to 90 (PLFV…GLAV). The short motif at 70 to 81 (PLFVLCSPVLVP) is the Proline-knot element. 2 stretches are compositionally biased toward basic and acidic residues: residues 122-131 (QMEHAKRRAQ) and 160-169 (EGGRGEEKKT). Residues 122–169 (QMEHAKRRAQDTAGHLGQKARETGQTVTGKGQEAGKTLEGGRGEEKKT) are disordered.

This sequence belongs to the oleosin family. As to expression, expressed in seeds (at protein level).

Its subcellular location is the lipid droplet. The protein resides in the membrane. Its function is as follows. May have a structural role to stabilize the lipid body during desiccation of the seed by preventing coalescence of the oil. Probably interacts with both lipid and phospholipid moieties of lipid bodies. May also provide recognition signals for specific lipase anchorage in lipolysis during seedling growth. In Corylus avellana (European hazel), this protein is Oleosin Cor a 15.